The chain runs to 1126 residues: MARPIFPNQQKIAEKLIILNDRGLGILTRIYNIKKACGDTKSKPGFLSEKSLESSIKFIVKRFPNIDVKGLNAIVNIKAEIIKSLSLYYHTFVDLLDFKDNVCELLTTMDACQIHLDITLNFELTKYYLDLVVTYVSLMIVLSRVEDRKAVLGLYNAAYELQNNQADTGFPRLGQMILDYEVPLKKLAEEFIPHQRLLTSALRSLTSIYALRNLPADKWREMQKLSLVGNPAILLKAVRTDTMSCEYISLEAMDRWIIFGLLLNHQMLGQYPEVNKIWLSALESSWVVALFRDEVLQIHQYIQATFDGIKGYSKRIGEVKEAYNTAVQKAALMHRERRKFLRTALKELALIMTDQPGLLGPKAIFIFIGLCLARDEILWLLRHNDNPPLLKNKGKSNEDLVDRQLPELLFHMEELRALVRKYSQVMQRYYVQYLSGFDATDLNIRMQSLQMCPEDESIIFSSLYNTAAALTVKQVEDNELFYFRPFRLDWFRLQTYMSVGKAALRIAEHAELARLLDSMVFHTRVVDNLDEILVETSDLSIFCFYNKMFDDQFHMCLEFPAQNRYIIAFPLICSHFQNCTHEMCPEERHHIRERSLSVVNIFLEEMAKEAKNIITTICDEQCTMADALLPKHCAKILSVQSARKKKDKSKSKHFDDIRKPGDESYRKTREDLTTMDKLHMALTELCFAINYCPTVNVWEFAFAPREYLCQNLEHRFSRDLVGMVMFNQETMEIAKPSELLASVRAYMNVLQTVENYVHIDITRVFNNCLLQQTQALDSHGEKTIAALYNTWYSEVLLRRVSAGNIVFSINQKAFVPISPEGWVPFNPQEFSDLNELRALAELVGPYGIKTLNETLMWHIANQVQELKSLVSTNKEVLITLRTSFDKPEVMKEQFKRLQDVDRVLQRMTIIGVIICFRNLVHEALVDVLDKRIPFLLSSVKDFQEHLPGGDQIRVASEMASAAGLLCKVDPTLATTLKSKKPEFDEGEHLTACLLMVFVAVSIPKLARNENSFYRATIDGHSNNTHCMAAAINNIFGALFTICGQSDMEDRMKEFLALASSSLLRLGQESDKEATRNRESIYLLLDEIVKQSPFLTMDLLESCFPYVLIRNAYHGVYKQEQILGLAL.

The helical transmembrane segment at 989 to 1006 threads the bilayer; it reads LTACLLMVFVAVSIPKLA.

The protein belongs to the HEM-1/HEM-2 family. In terms of assembly, component of the WAVE complex composed of Hem/Kette, Scar/Wave and Cyfip where it binds directly to the C-terminus of Cyfip.

It localises to the cell membrane. Plays a role during growth of the oocyte. The polypeptide is Membrane-associated protein Hem (Hem) (Drosophila melanogaster (Fruit fly)).